Consider the following 690-residue polypeptide: Elongation factor G (690 aa).

Residues 8-283 (EDYRNFGIMA…AVVDYLPSPV (276 aa)) enclose the tr-type G domain. Residues 17 to 24 (AHIDAGKT), 81 to 85 (DTPGH), and 135 to 138 (NKMD) contribute to the GTP site.

The protein belongs to the TRAFAC class translation factor GTPase superfamily. Classic translation factor GTPase family. EF-G/EF-2 subfamily.

It localises to the cytoplasm. Catalyzes the GTP-dependent ribosomal translocation step during translation elongation. During this step, the ribosome changes from the pre-translocational (PRE) to the post-translocational (POST) state as the newly formed A-site-bound peptidyl-tRNA and P-site-bound deacylated tRNA move to the P and E sites, respectively. Catalyzes the coordinated movement of the two tRNA molecules, the mRNA and conformational changes in the ribosome. This chain is Elongation factor G, found in Rhodopseudomonas palustris (strain BisB18).